Consider the following 88-residue polypeptide: Apolipoprotein C-I (88 aa).

The signal sequence occupies residues methionine 1–alanine 26.

The protein belongs to the apolipoprotein C1 family. Adult and fetal liver.

It localises to the secreted. In terms of biological role, inhibitor of lipoprotein binding to the low density lipoprotein (LDL) receptor, LDL receptor-related protein, and very low density lipoprotein (VLDL) receptor. Associates with high density lipoproteins (HDL) and the triacylglycerol-rich lipoproteins in the plasma and makes up about 10% of the protein of the VLDL and 2% of that of HDL. Appears to interfere directly with fatty acid uptake and is also the major plasma inhibitor of cholesteryl ester transfer protein (CETP). Modulates the interaction of APOE with beta-migrating VLDL and inhibits binding of beta-VLDL to the LDL receptor-related protein. Binds free fatty acids and reduces their intracellular esterification. The sequence is that of Apolipoprotein C-I (Apoc1) from Mus musculus (Mouse).